Here is a 432-residue protein sequence, read N- to C-terminus: Enolase (432 aa).

A (2R)-2-phosphoglycerate-binding site is contributed by Gln-167. The active-site Proton donor is the Glu-209. Residues Asp-246, Glu-290, and Asp-317 each coordinate Mg(2+). The (2R)-2-phosphoglycerate site is built by Lys-342, Arg-371, Ser-372, and Lys-393. Residue Lys-342 is the Proton acceptor of the active site.

The protein belongs to the enolase family. In terms of assembly, component of the RNA degradosome, a multiprotein complex involved in RNA processing and mRNA degradation. Mg(2+) is required as a cofactor.

The protein localises to the cytoplasm. It localises to the secreted. It is found in the cell surface. The enzyme catalyses (2R)-2-phosphoglycerate = phosphoenolpyruvate + H2O. It participates in carbohydrate degradation; glycolysis; pyruvate from D-glyceraldehyde 3-phosphate: step 4/5. Catalyzes the reversible conversion of 2-phosphoglycerate (2-PG) into phosphoenolpyruvate (PEP). It is essential for the degradation of carbohydrates via glycolysis. The polypeptide is Enolase (Salmonella dublin (strain CT_02021853)).